The following is a 234-amino-acid chain: Large ribosomal subunit protein uL1 (234 aa).

It belongs to the universal ribosomal protein uL1 family. Part of the 50S ribosomal subunit.

Functionally, binds directly to 23S rRNA. The L1 stalk is quite mobile in the ribosome, and is involved in E site tRNA release. Protein L1 is also a translational repressor protein, it controls the translation of the L11 operon by binding to its mRNA. This is Large ribosomal subunit protein uL1 from Prochlorococcus marinus (strain SARG / CCMP1375 / SS120).